Reading from the N-terminus, the 83-residue chain is Translation initiation factor IF-1 (83 aa).

One can recognise an S1-like domain in the interval 1-72 (MAKEESIEMQ…TRGRIVYREA (72 aa)).

This sequence belongs to the IF-1 family. As to quaternary structure, component of the 30S ribosomal translation pre-initiation complex which assembles on the 30S ribosome in the order IF-2 and IF-3, IF-1 and N-formylmethionyl-tRNA(fMet); mRNA recruitment can occur at any time during PIC assembly.

It is found in the cytoplasm. Functionally, one of the essential components for the initiation of protein synthesis. Stabilizes the binding of IF-2 and IF-3 on the 30S subunit to which N-formylmethionyl-tRNA(fMet) subsequently binds. Helps modulate mRNA selection, yielding the 30S pre-initiation complex (PIC). Upon addition of the 50S ribosomal subunit IF-1, IF-2 and IF-3 are released leaving the mature 70S translation initiation complex. This Coxiella burnetii (strain Dugway 5J108-111) protein is Translation initiation factor IF-1.